We begin with the raw amino-acid sequence, 492 residues long: Solute carrier family 2, facilitated glucose transporter member 1 (492 aa).

M1 carries the N-acetylmethionine modification. Residues 1 to 11 (MEPSSKKLTGR) are Cytoplasmic-facing. The helical transmembrane segment at 12–33 (LMLAVGGAVLGSLQFGYNTGVI) threads the bilayer. The Extracellular portion of the chain corresponds to 34–66 (NAPQKVIEEFYNQTWLHRYGESISPATLTTLWS). N-linked (GlcNAc...) asparagine glycosylation is present at N45. Residues 67–87 (LSVAIFSVGGMIGSFSVGLFV) form a helical membrane-spanning segment. Residues 88–90 (NRF) are Cytoplasmic-facing. A helical membrane pass occupies residues 91–112 (GRRNSMLMMNLLAFISAVLMGF). At 113–120 (SKLGKSFE) the chain is on the extracellular side. A helical membrane pass occupies residues 121-144 (MLILGRFIIGVYCGLTTGFVPMYV). Over 145–155 (GEVSPTALRGA) the chain is Cytoplasmic. Residues 156 to 176 (LGTLHQLGIVVGILIAQVFGL) form a helical membrane-spanning segment. Q161 provides a ligand contact to D-glucose. At 177-185 (DSIMGNEEL) the chain is on the extracellular side. A helical membrane pass occupies residues 186–206 (WPLLLSVIFIPALLQCVLLPF). At 207–271 (CPESPRFLLI…LFRSAAYRQP (65 aa)) the chain is on the cytoplasmic side. S226 is modified (phosphoserine). A helical membrane pass occupies residues 272 to 293 (ILIAVVLQLSQQLSGINAVFYY). D-glucose contacts are provided by residues 282–283 (QQ) and N288. Residues 294–306 (STSIFEKAGVQQP) lie on the Extracellular side of the membrane. Residues 307 to 328 (VYATIGSGIVNTAFTVVSLFVV) traverse the membrane as a helical segment. N317 provides a ligand contact to D-glucose. Residues 329 to 334 (ERAGRR) lie on the Cytoplasmic side of the membrane. The chain crosses the membrane as a helical span at residues 335–355 (TLHLIGLAGMAGCAVLMTIAL). Residues 356 to 365 (ALLEQLPWMS) are Extracellular-facing. A helical membrane pass occupies residues 366–388 (YLSIVAIFGFVAFFEVGPGPIPW). Residues E380 and W388 each coordinate D-glucose. Residues 389-401 (FIVAELFSQGPRP) are Cytoplasmic-facing. Residues 402–422 (AAIAVAGFSNWTSNFIVGMCF) form a helical membrane-spanning segment. Residues 423-429 (QYVEQLC) lie on the Extracellular side of the membrane. A helical membrane pass occupies residues 430-450 (GPYVFIIFTVLLVLFFIFTYF). S465 is subject to Phosphoserine. The interval 468-492 (RQGGASQSDKTPEELFHPLGADSQV) is disordered. Residue T478 is modified to Phosphothreonine. Position 490 is a phosphoserine (S490).

This sequence belongs to the major facilitator superfamily. Sugar transporter (TC 2.A.1.1) family. Glucose transporter subfamily. In terms of assembly, found in a complex with ADD2, DMTN and SLC2A1. Interacts (via C-terminus cytoplasmic region) with DMTN. Interacts with SNX27; the interaction is required when endocytosed to prevent degradation in lysosomes and promote recycling to the plasma membrane. Interacts with GIPC (via PDZ domain). Interacts with STOM. Interacts with SGTA (via Gln-rich region). Interacts with BSG. Interacts with SMIM43; the interaction may promote SLC2A1-mediated glucose transport to meet the energy needs of mesendoderm differentiation. Phosphorylation at Ser-226 by PKC promotes glucose uptake by increasing cell membrane localization.

It localises to the cell membrane. The protein localises to the photoreceptor inner segment. It catalyses the reaction D-glucose(out) = D-glucose(in). With respect to regulation, the uptake of glucose is inhibited by cytochalasin B. Glucose uptake is increased in response to phorbol ester 12-O-tetradecanoylphorbol-13-acetate (TPA) treatment: TPA-induced glucose uptake requires phosphorylation at Ser-226. Facilitative glucose transporter, which is responsible for constitutive or basal glucose uptake. Has a very broad substrate specificity; can transport a wide range of aldoses including both pentoses and hexoses. Most important energy carrier of the brain: present at the blood-brain barrier and assures the energy-independent, facilitative transport of glucose into the brain. In association with BSG and NXNL1, promotes retinal cone survival by increasing glucose uptake into photoreceptors. Required for mesendoderm differentiation. The polypeptide is Solute carrier family 2, facilitated glucose transporter member 1 (Sus scrofa (Pig)).